A 312-amino-acid polypeptide reads, in one-letter code: Beta-ketoacyl-[acyl-carrier-protein] synthase III (312 aa).

Catalysis depends on residues Cys112 and His237. An ACP-binding region spans residues 238–242 (QANIR). Residue Asn267 is part of the active site.

This sequence belongs to the thiolase-like superfamily. FabH family. As to quaternary structure, homodimer.

The protein localises to the cytoplasm. The catalysed reaction is malonyl-[ACP] + acetyl-CoA + H(+) = 3-oxobutanoyl-[ACP] + CO2 + CoA. The protein operates within lipid metabolism; fatty acid biosynthesis. In terms of biological role, catalyzes the condensation reaction of fatty acid synthesis by the addition to an acyl acceptor of two carbons from malonyl-ACP. Catalyzes the first condensation reaction which initiates fatty acid synthesis and may therefore play a role in governing the total rate of fatty acid production. Possesses both acetoacetyl-ACP synthase and acetyl transacylase activities. Its substrate specificity determines the biosynthesis of branched-chain and/or straight-chain of fatty acids. This is Beta-ketoacyl-[acyl-carrier-protein] synthase III from Bacillus pumilus (strain SAFR-032).